Consider the following 630-residue polypeptide: MSVSSGVQILTKPETVDRRRSAETTKEAGRPLEMAVSEPEASAAEWKQLDPAQSNLYNDVMLENYCNQASMGCQAPKPDMISKLEKGEAPWLGKGKRPSQGCPSKIARPKQKETDGKVQKDDDQLENIQKSQNKLLREVAVKKKTQAKKNGSDCGSLGKKNNLHKKHVPSKKRLLKFESCGKILKQNLDLPDHSRNCVKRKSDAAKEHKKSFNHSLSDTRKGKKQTGKKHEKLSSHSSSDKCNKTGKKHDKLCCHSSSHIKQDKIQTGEKHEKSPSLSSSTKHEKPQACVKPYECNQCGKVLSHKQGLIDHQRVHTGEKPYECNECGIAFSQKSHLVVHQRTHTGEKPYECIQCGKAHGHKHALTDHLRIHTGEKPYECAECGKTFRHSSNLIQHVRSHTGEKPYECKECGKSFRYNSSLTEHVRTHTGEIPYECNECGKAFKYSSSLTKHMRIHTGEKPFECNECGKAFSKKSHLIIHQRTHTKEKPYKCNECGKAFGHSSSLTYHMRTHTGESPFECNQCGKGFKQIEGLTQHQRVHTGEKPYECNECGKAFSQKSHLIVHQRTHTGEKPYECNECEKAFNAKSQLVIHQRSHTGEKPYECNECGKTFKQNASLTKHVKTHSEDKSHE.

Disordered regions lie at residues 1–45, 77–172, and 193–285; these read MSVS…SAAE, KPDM…PSKK, and HSRN…KHEK. The segment covering 14-30 has biased composition (basic and acidic residues); that stretch reads ETVDRRRSAETTKEAGR. The region spanning 32-103 is the KRAB domain; that stretch reads LEMAVSEPEA…KGKRPSQGCP (72 aa). Phosphoserine is present on Ser42. Residues 110-122 are compositionally biased toward basic and acidic residues; it reads KQKETDGKVQKDD. Residues 161–172 are compositionally biased toward basic residues; that stretch reads NNLHKKHVPSKK. Basic and acidic residues predominate over residues 193–206; that stretch reads HSRNCVKRKSDAAK. Residues 221-231 are compositionally biased toward basic residues; it reads KGKKQTGKKHE. Composition is skewed to basic and acidic residues over residues 232-243 and 260-274; these read KLSSHSSSDKCN and IKQD…HEKS. 2 consecutive C2H2-type zinc fingers follow at residues 293–315 and 321–343; these read YECN…QRVH and YECN…QRTH. The C2H2-type 3; atypical zinc finger occupies 349–367; that stretch reads YECIQCGKAHGHKHALTDH. C2H2-type zinc fingers lie at residues 377–399, 405–427, 433–455, 461–483, 489–511, 517–539, 545–567, 573–595, and 601–623; these read YECA…VRSH, YECK…VRTH, YECN…MRIH, FECN…QRTH, YKCN…MRTH, FECN…QRVH, YECN…QRTH, YECN…QRSH, and YECN…VKTH.

The protein belongs to the krueppel C2H2-type zinc-finger protein family. In terms of tissue distribution, expressed at low level in several tissues including fetal cartilage.

It is found in the nucleus. In terms of biological role, may be involved in transcriptional regulation. The sequence is that of Zinc finger protein 37 homolog (ZFP37) from Homo sapiens (Human).